The following is a 739-amino-acid chain: G2 and S phase-expressed protein 1 (739 aa).

Residues methionine 1–serine 11 show a composition bias toward basic and acidic residues. Residues methionine 1–methionine 20 are disordered. Serine 91 is modified (phosphoserine). 3 disordered regions span residues serine 116–arginine 136, glutamate 149–valine 306, and proline 320–alanine 639. Positions glutamate 149–threonine 165 are enriched in basic and acidic residues. Serine 157 carries the phosphoserine modification. Threonine 159 is subject to Phosphothreonine. 5 positions are modified to phosphoserine: serine 171, serine 187, serine 208, serine 247, and serine 262. Residues proline 181 to alanine 195 are compositionally biased toward low complexity. A compositionally biased stretch (basic and acidic residues) spans isoleucine 268–proline 280. Low complexity-rich tracts occupy residues alanine 284 to glycine 294 and serine 330 to alanine 342. Serine 331 carries the post-translational modification Phosphoserine. Polar residues predominate over residues proline 360–lysine 372. The span at threonine 411 to proline 424 shows a compositional bias: low complexity. 2 stretches are compositionally biased toward polar residues: residues tryptophan 430–threonine 446 and cysteine 455–phenylalanine 470. A Phosphoserine modification is found at serine 480. Over residues proline 481 to leucine 522 the composition is skewed to polar residues. Threonine 485 bears the Phosphothreonine mark. 6 positions are modified to phosphoserine: serine 496, serine 499, serine 514, serine 520, serine 523, and serine 528. Threonine 532 is modified (phosphothreonine). Serine 535 and serine 555 each carry phosphoserine. The span at glutamate 577–leucine 590 shows a compositional bias: basic and acidic residues. Serine 594 and serine 611 each carry phosphoserine. Residue threonine 696 is modified to Phosphothreonine. A phosphoserine mark is found at serine 707, serine 717, serine 718, serine 724, and serine 734.

Post-translationally, phosphorylated in mitosis.

Its subcellular location is the cytoplasm. It is found in the cytoskeleton. Its function is as follows. May be involved in p53-induced cell cycle arrest in G2/M phase by interfering with microtubule rearrangements that are required to enter mitosis. Overexpression delays G2/M phase progression. The protein is G2 and S phase-expressed protein 1 of Homo sapiens (Human).